Reading from the N-terminus, the 978-residue chain is Peroxisomal ATPase PEX6 (978 aa).

Arg119 is modified (omega-N-methylarginine). ATP is bound by residues 470 to 477 and 742 to 749; these read GPPGSGKT and GPPGTGKT.

It belongs to the AAA ATPase family. As to quaternary structure, interacts with PEX1; forming the PEX1-PEX6 AAA ATPase complex, which is composed of a heterohexamer formed by a trimer of PEX1-PEX6 dimers. Interacts with PEX26; interaction is direct and promotes recruitment to peroxisomal membranes. Interacts with ZFAND6.

The protein resides in the cytoplasm. Its subcellular location is the cytosol. It is found in the peroxisome membrane. It localises to the cell projection. The protein localises to the cilium. The protein resides in the photoreceptor outer segment. It catalyses the reaction ATP + H2O = ADP + phosphate + H(+). In terms of biological role, component of the PEX1-PEX6 AAA ATPase complex, a protein dislocase complex that mediates the ATP-dependent extraction of the PEX5 receptor from peroxisomal membranes, an essential step for PEX5 recycling. Specifically recognizes PEX5 monoubiquitinated at 'Cys-11', and pulls it out of the peroxisome lumen through the PEX2-PEX10-PEX12 retrotranslocation channel. Extraction by the PEX1-PEX6 AAA ATPase complex is accompanied by unfolding of the TPR repeats and release of bound cargo from PEX5. In Rattus norvegicus (Rat), this protein is Peroxisomal ATPase PEX6.